A 504-amino-acid chain; its full sequence is UDP-N-acetylmuramoylalanine--D-glutamate ligase (504 aa).

ATP is bound at residue glycine 129–threonine 135.

The protein belongs to the MurCDEF family.

Its subcellular location is the cytoplasm. The catalysed reaction is UDP-N-acetyl-alpha-D-muramoyl-L-alanine + D-glutamate + ATP = UDP-N-acetyl-alpha-D-muramoyl-L-alanyl-D-glutamate + ADP + phosphate + H(+). It functions in the pathway cell wall biogenesis; peptidoglycan biosynthesis. Cell wall formation. Catalyzes the addition of glutamate to the nucleotide precursor UDP-N-acetylmuramoyl-L-alanine (UMA). This chain is UDP-N-acetylmuramoylalanine--D-glutamate ligase, found in Burkholderia pseudomallei (strain 668).